An 826-amino-acid polypeptide reads, in one-letter code: Putative pentatricopeptide repeat-containing protein At1g13630 (826 aa).

16 PPR repeats span residues 228-262, 263-297, 298-332, 333-367, 368-402, 404-438, 439-473, 474-508, 509-543, 544-578, 579-613, 614-648, 661-695, 696-730, 731-765, and 766-800; these read NEHT…DIGP, SVVS…GLVP, SVYS…GVEP, DSVT…GLSP, DVIT…GFEL, SIIP…GLSP, DLVA…RILP, NSRT…GETL, DIVL…GITP, SVAT…GLAP, SVVS…GIPP, TNVT…KCKQ, DQIT…NLDA, SSAT…NVSL, SKFA…GFNV, and SIRD…GISP.

This sequence belongs to the PPR family. P subfamily.

This is Putative pentatricopeptide repeat-containing protein At1g13630 from Arabidopsis thaliana (Mouse-ear cress).